Consider the following 365-residue polypeptide: Mitogen-activated protein kinase HOG1A (365 aa).

In terms of domain architecture, Protein kinase spans 24–303 (YTDLQPVGMG…AADALAHPYL (280 aa)). ATP contacts are provided by residues 30–38 (VGMGAFGLL) and K53. D145 functions as the Proton acceptor in the catalytic mechanism. A Phosphothreonine modification is found at T175. The TXY motif lies at 175 to 177 (TGY). Y177 is subject to Phosphotyrosine.

The protein belongs to the protein kinase superfamily. Ser/Thr protein kinase family. MAP kinase subfamily. HOG1 sub-subfamily. The cofactor is Mg(2+). Phosphorylated. Dually phosphorylated on Thr-175 and Tyr-177, which activates the enzyme. Rapidly dephosphorylated upon either hypo- or hyperosmotic shock.

It localises to the cytoplasm. The protein resides in the nucleus. It carries out the reaction L-seryl-[protein] + ATP = O-phospho-L-seryl-[protein] + ADP + H(+). It catalyses the reaction L-threonyl-[protein] + ATP = O-phospho-L-threonyl-[protein] + ADP + H(+). Activated by tyrosine and threonine phosphorylation. In terms of biological role, proline-directed serine/threonine-protein kinase involved in a signal transduction pathway that is activated by changes in the osmolarity of the extracellular environment. Controls osmotic regulation of transcription of target genes. The protein is Mitogen-activated protein kinase HOG1A (HOG1A) of Wallemia ichthyophaga (strain EXF-994 / CBS 113033).